We begin with the raw amino-acid sequence, 265 residues long: uncharacterized protein (265 aa).

Disordered stretches follow at residues 21–53 (TLTH…LGPH) and 78–133 (HAPS…SSVS). Acidic residues predominate over residues 90-101 (DDDDDDEDDDDS). The segment covering 114 to 123 (SSSSSSSPRV) has biased composition (low complexity). Position 137 to 144 (137 to 144 (AILHQGKS)) interacts with ATP.

This is an uncharacterized protein from Saccharomyces cerevisiae (strain ATCC 204508 / S288c) (Baker's yeast).